The following is a 712-amino-acid chain: Polyribonucleotide nucleotidyltransferase (712 aa).

Asp493 and Asp499 together coordinate Mg(2+). The region spanning 560–619 is the KH domain; sequence PRLLTFKVDPEDIGKIIGPGGKTVRGITEATGAKVDISDDGTITVSSSVGGQAEAARAMI. One can recognise an S1 motif domain in the interval 629–697; the sequence is GQVYLGKVTR…HKGRINLTRL (69 aa).

Belongs to the polyribonucleotide nucleotidyltransferase family. Requires Mg(2+) as cofactor.

The protein resides in the cytoplasm. The catalysed reaction is RNA(n+1) + phosphate = RNA(n) + a ribonucleoside 5'-diphosphate. In terms of biological role, involved in mRNA degradation. Catalyzes the phosphorolysis of single-stranded polyribonucleotides processively in the 3'- to 5'-direction. The polypeptide is Polyribonucleotide nucleotidyltransferase (Synechococcus sp. (strain JA-2-3B'a(2-13)) (Cyanobacteria bacterium Yellowstone B-Prime)).